Reading from the N-terminus, the 142-residue chain is 3-hydroxyacyl-[acyl-carrier-protein] dehydratase FabZ (142 aa).

His-49 is a catalytic residue.

It belongs to the thioester dehydratase family. FabZ subfamily.

It localises to the cytoplasm. The catalysed reaction is a (3R)-hydroxyacyl-[ACP] = a (2E)-enoyl-[ACP] + H2O. Involved in unsaturated fatty acids biosynthesis. Catalyzes the dehydration of short chain beta-hydroxyacyl-ACPs and long chain saturated and unsaturated beta-hydroxyacyl-ACPs. The sequence is that of 3-hydroxyacyl-[acyl-carrier-protein] dehydratase FabZ from Deinococcus geothermalis (strain DSM 11300 / CIP 105573 / AG-3a).